A 726-amino-acid polypeptide reads, in one-letter code: Catalase-peroxidase (726 aa).

Over residues 1–12 (MSTPSDQHNTLS) the composition is skewed to polar residues. Residues 1-34 (MSTPSDQHNTLSAGKCPFHQGNSNQTAGGGTSSR) are disordered. A cross-link (tryptophyl-tyrosyl-methioninium (Trp-Tyr) (with M-252)) is located at residues 105-226 (WHSAGTYRSA…LGATEMGLIY (122 aa)). The Proton acceptor role is filled by His-106. The tryptophyl-tyrosyl-methioninium (Tyr-Met) (with W-105) cross-link spans 226–252 (YVNPEGPNHSGDPASAAPAIRATFGNM). His-267 provides a ligand contact to heme b.

Belongs to the peroxidase family. Peroxidase/catalase subfamily. As to quaternary structure, homodimer or homotetramer. Heme b is required as a cofactor. Post-translationally, formation of the three residue Trp-Tyr-Met cross-link is important for the catalase, but not the peroxidase activity of the enzyme.

The enzyme catalyses H2O2 + AH2 = A + 2 H2O. The catalysed reaction is 2 H2O2 = O2 + 2 H2O. Functionally, bifunctional enzyme with both catalase and broad-spectrum peroxidase activity. The sequence is that of Catalase-peroxidase from Cronobacter sakazakii (strain ATCC BAA-894) (Enterobacter sakazakii).